A 113-amino-acid chain; its full sequence is uncharacterized protein (113 aa).

The first 19 residues, 1 to 19 (MLSPLSPRIIAAFTTAVGA), serve as a signal peptide directing secretion.

The protein to M.tuberculosis Rv1291c.

This is an uncharacterized protein from Mycobacterium tuberculosis (strain CDC 1551 / Oshkosh).